A 308-amino-acid polypeptide reads, in one-letter code: MFKKRNLKWLSILATVIMAWVQLGGALVTKTGSENGCGASWPLCHGALLPQNLPIATIIELSHRATSALSLIVVLWLVITAWKNIGYIKEVKPLCIISVAFLLIQALVGAAAVLWQQNDYVLALHFGISLISFSSVFVLTLIIFDVDQKYEANKVHIDRKLRIYTWTMAICLYVGIYTGALVRHTKSSLAYGSWPLPFNDLIPHTEQDWVQLAHRTLALIASISVFLAFNYAIKHYQNNRTIRYGYTAALLLIILQIVTGALSIFTHVNLIIALLHALIITFEFGLIAYLIVLLLRSQRVEKVKQNAY.

Topologically, residues 1 to 8 (MFKKRNLK) are cytoplasmic. A helical membrane pass occupies residues 9–29 (WLSILATVIMAWVQLGGALVT). Topologically, residues 30-67 (KTGSENGCGASWPLCHGALLPQNLPIATIIELSHRATS) are extracellular. A disulfide bridge links cysteine 37 with cysteine 44. Glutamate 60 is a catalytic residue. Histidine 63 contributes to the heme o binding site. A helical transmembrane segment spans residues 68–88 (ALSLIVVLWLVITAWKNIGYI). The Cytoplasmic segment spans residues 89–93 (KEVKP). The helical transmembrane segment at 94 to 114 (LCIISVAFLLIQALVGAAAVL) threads the bilayer. Residues 115–123 (WQQNDYVLA) lie on the Extracellular side of the membrane. The helical transmembrane segment at 124 to 144 (LHFGISLISFSSVFVLTLIIF) threads the bilayer. Residue histidine 125 participates in heme o binding. At 145–161 (DVDQKYEANKVHIDRKL) the chain is on the cytoplasmic side. A helical transmembrane segment spans residues 162-182 (RIYTWTMAICLYVGIYTGALV). The Extracellular segment spans residues 183–215 (RHTKSSLAYGSWPLPFNDLIPHTEQDWVQLAHR). Histidine 214 contacts heme b. The chain crosses the membrane as a helical span at residues 216-236 (TLALIASISVFLAFNYAIKHY). The Cytoplasmic segment spans residues 237–244 (QNNRTIRY). The chain crosses the membrane as a helical span at residues 245–265 (GYTAALLLIILQIVTGALSIF). Residues 266–270 (THVNL) are Extracellular-facing. Residues 271 to 291 (IIALLHALIITFEFGLIAYLI) form a helical membrane-spanning segment. Histidine 276 provides a ligand contact to heme b. At 292 to 308 (VLLLRSQRVEKVKQNAY) the chain is on the cytoplasmic side.

This sequence belongs to the COX15/CtaA family. Type 1 subfamily. In terms of assembly, interacts with CtaB. The cofactor is heme b.

It localises to the cell membrane. It catalyses the reaction Fe(II)-heme o + 2 A + H2O = Fe(II)-heme a + 2 AH2. The protein operates within porphyrin-containing compound metabolism; heme A biosynthesis; heme A from heme O: step 1/1. In terms of biological role, catalyzes the conversion of heme O to heme A by two successive hydroxylations of the methyl group at C8. The first hydroxylation forms heme I, the second hydroxylation results in an unstable dihydroxymethyl group, which spontaneously dehydrates, resulting in the formyl group of heme A. The chain is Heme A synthase from Staphylococcus carnosus (strain TM300).